Consider the following 439-residue polypeptide: tRNA-2-methylthio-N(6)-dimethylallyladenosine synthase (439 aa).

One can recognise an MTTase N-terminal domain in the interval 2–119; sequence KKLYLKTHGC…LPDLLDSVIQ (118 aa). Residues cysteine 11, cysteine 48, cysteine 82, cysteine 156, cysteine 160, and cysteine 163 each coordinate [4Fe-4S] cluster. The 233-residue stretch at 142–374 folds into the Radical SAM core domain; that stretch reads RAEGPSAFVS…QNRINVKAAE (233 aa). One can recognise a TRAM domain in the interval 377 to 439; it reads QSMVGTQQRI…RPYSLWGEIC (63 aa).

Belongs to the methylthiotransferase family. MiaB subfamily. In terms of assembly, monomer. It depends on [4Fe-4S] cluster as a cofactor.

The protein localises to the cytoplasm. It carries out the reaction N(6)-dimethylallyladenosine(37) in tRNA + (sulfur carrier)-SH + AH2 + 2 S-adenosyl-L-methionine = 2-methylsulfanyl-N(6)-dimethylallyladenosine(37) in tRNA + (sulfur carrier)-H + 5'-deoxyadenosine + L-methionine + A + S-adenosyl-L-homocysteine + 2 H(+). Functionally, catalyzes the methylthiolation of N6-(dimethylallyl)adenosine (i(6)A), leading to the formation of 2-methylthio-N6-(dimethylallyl)adenosine (ms(2)i(6)A) at position 37 in tRNAs that read codons beginning with uridine. The polypeptide is tRNA-2-methylthio-N(6)-dimethylallyladenosine synthase (Coxiella burnetii (strain Dugway 5J108-111)).